Reading from the N-terminus, the 275-residue chain is Large ribosomal subunit protein uL2c (275 aa).

Residues 225–256 (AMNAVDHPHGGGEGRSPIGRSQPSTPWGRPAL) form a disordered region.

Belongs to the universal ribosomal protein uL2 family. As to quaternary structure, part of the 50S ribosomal subunit.

It is found in the plastid. The protein localises to the chloroplast. This Cyanidium caldarium (Red alga) protein is Large ribosomal subunit protein uL2c (rpl2).